The following is a 237-amino-acid chain: Ribonuclease PH (237 aa).

Phosphate-binding positions include Arg-86 and 124-126; that span reads GTR.

It belongs to the RNase PH family. Homohexameric ring arranged as a trimer of dimers.

It catalyses the reaction tRNA(n+1) + phosphate = tRNA(n) + a ribonucleoside 5'-diphosphate. Its function is as follows. Phosphorolytic 3'-5' exoribonuclease that plays an important role in tRNA 3'-end maturation. Removes nucleotide residues following the 3'-CCA terminus of tRNAs; can also add nucleotides to the ends of RNA molecules by using nucleoside diphosphates as substrates, but this may not be physiologically important. Probably plays a role in initiation of 16S rRNA degradation (leading to ribosome degradation) during starvation. The sequence is that of Ribonuclease PH from Shewanella pealeana (strain ATCC 700345 / ANG-SQ1).